Consider the following 327-residue polypeptide: tRNA pseudouridine synthase B (327 aa).

The active-site Nucleophile is the aspartate 69. The substrate site is built by tyrosine 97, tyrosine 201, and leucine 222.

The protein belongs to the pseudouridine synthase TruB family. Type 1 subfamily.

The catalysed reaction is uridine(55) in tRNA = pseudouridine(55) in tRNA. Its function is as follows. Responsible for synthesis of pseudouridine from uracil-55 in the psi GC loop of transfer RNAs. The polypeptide is tRNA pseudouridine synthase B (Wigglesworthia glossinidia brevipalpis).